Consider the following 245-residue polypeptide: PF03932 family protein CutC (245 aa).

This sequence belongs to the CutC family.

It is found in the cytoplasm. The protein is PF03932 family protein CutC of Caulobacter vibrioides (strain ATCC 19089 / CIP 103742 / CB 15) (Caulobacter crescentus).